We begin with the raw amino-acid sequence, 237 residues long: Putative N-acetylmannosamine-6-phosphate 2-epimerase (237 aa).

Belongs to the NanE family.

The catalysed reaction is an N-acyl-D-glucosamine 6-phosphate = an N-acyl-D-mannosamine 6-phosphate. Its pathway is amino-sugar metabolism; N-acetylneuraminate degradation; D-fructose 6-phosphate from N-acetylneuraminate: step 3/5. Converts N-acetylmannosamine-6-phosphate (ManNAc-6-P) to N-acetylglucosamine-6-phosphate (GlcNAc-6-P). In Listeria monocytogenes serotype 4a (strain HCC23), this protein is Putative N-acetylmannosamine-6-phosphate 2-epimerase.